The sequence spans 689 residues: DNA ligase (689 aa).

NAD(+) contacts are provided by residues Asp-51–Asp-55, Ser-100–Leu-101, and Glu-129. Lys-131 functions as the N6-AMP-lysine intermediate in the catalytic mechanism. Residues Arg-152, Glu-189, Lys-308, and Lys-332 each coordinate NAD(+). The Zn(2+) site is built by Cys-426, Cys-429, Cys-444, and Cys-450. Positions Ala-609 to Arg-689 constitute a BRCT domain.

It belongs to the NAD-dependent DNA ligase family. LigA subfamily. Mg(2+) serves as cofactor. Requires Mn(2+) as cofactor.

The enzyme catalyses NAD(+) + (deoxyribonucleotide)n-3'-hydroxyl + 5'-phospho-(deoxyribonucleotide)m = (deoxyribonucleotide)n+m + AMP + beta-nicotinamide D-nucleotide.. In terms of biological role, DNA ligase that catalyzes the formation of phosphodiester linkages between 5'-phosphoryl and 3'-hydroxyl groups in double-stranded DNA using NAD as a coenzyme and as the energy source for the reaction. It is essential for DNA replication and repair of damaged DNA. In Shewanella oneidensis (strain ATCC 700550 / JCM 31522 / CIP 106686 / LMG 19005 / NCIMB 14063 / MR-1), this protein is DNA ligase.